The following is an 89-amino-acid chain: uncharacterized protein (89 aa).

This is an uncharacterized protein from Methanocaldococcus jannaschii (strain ATCC 43067 / DSM 2661 / JAL-1 / JCM 10045 / NBRC 100440) (Methanococcus jannaschii).